The sequence spans 254 residues: Pyruvate aldolase (254 aa).

His48 acts as the Proton acceptor in catalysis. The a divalent metal cation site is built by Glu151 and Asp177.

It belongs to the HpcH/HpaI aldolase family. The cofactor is a divalent metal cation.

It carries out the reaction D-glyceraldehyde + pyruvate = 2-dehydro-3-deoxy-L-galactonate. Its function is as follows. Aldolase which can catalyze in vitro the aldolisation reaction between pyruvate (PA) and D-glyceraldehyde (D-GA) to form 2-dehydro-3-deoxy-L-galactonate. This chain is Pyruvate aldolase, found in Rhizobium etli (strain ATCC 51251 / DSM 11541 / JCM 21823 / NBRC 15573 / CFN 42).